Here is a 38-residue protein sequence, read N- to C-terminus: Photosystem II reaction center protein L (38 aa).

A helical transmembrane segment spans residues 17-37; sequence SLYWGLLCIFVLAILFSSYFF.

The protein belongs to the PsbL family. As to quaternary structure, PSII is composed of 1 copy each of membrane proteins PsbA, PsbB, PsbC, PsbD, PsbE, PsbF, PsbH, PsbI, PsbJ, PsbK, PsbL, PsbM, PsbT, PsbX, PsbY, PsbZ, Psb30/Ycf12, at least 3 peripheral proteins of the oxygen-evolving complex and a large number of cofactors. It forms dimeric complexes.

It localises to the plastid. Its subcellular location is the chloroplast thylakoid membrane. One of the components of the core complex of photosystem II (PSII). PSII is a light-driven water:plastoquinone oxidoreductase that uses light energy to abstract electrons from H(2)O, generating O(2) and a proton gradient subsequently used for ATP formation. It consists of a core antenna complex that captures photons, and an electron transfer chain that converts photonic excitation into a charge separation. This subunit is found at the monomer-monomer interface and is required for correct PSII assembly and/or dimerization. The protein is Photosystem II reaction center protein L of Cyanidioschyzon merolae (strain NIES-3377 / 10D) (Unicellular red alga).